The sequence spans 1086 residues: Isoleucine--tRNA ligase (1086 aa).

The 'HIGH' region signature appears at 53 to 63; that stretch reads PFANGLPHYGH. Positions 624-628 match the 'KMSKS' region motif; the sequence is KLSKR. Lys627 is a binding site for ATP.

Belongs to the class-I aminoacyl-tRNA synthetase family. IleS type 2 subfamily. As to quaternary structure, monomer. Zn(2+) is required as a cofactor.

The protein resides in the cytoplasm. The catalysed reaction is tRNA(Ile) + L-isoleucine + ATP = L-isoleucyl-tRNA(Ile) + AMP + diphosphate. In terms of biological role, catalyzes the attachment of isoleucine to tRNA(Ile). As IleRS can inadvertently accommodate and process structurally similar amino acids such as valine, to avoid such errors it has two additional distinct tRNA(Ile)-dependent editing activities. One activity is designated as 'pretransfer' editing and involves the hydrolysis of activated Val-AMP. The other activity is designated 'posttransfer' editing and involves deacylation of mischarged Val-tRNA(Ile). The chain is Isoleucine--tRNA ligase from Rickettsia typhi (strain ATCC VR-144 / Wilmington).